The sequence spans 356 residues: tRNA N6-adenosine threonylcarbamoyltransferase (356 aa).

Fe cation is bound by residues His115 and His119. Residues 138–142, Asp171, Gly184, and Asn283 each bind substrate; that span reads LVSGG. A Fe cation-binding site is contributed by Asp311.

It belongs to the KAE1 / TsaD family. Requires Fe(2+) as cofactor.

The protein resides in the cytoplasm. The catalysed reaction is L-threonylcarbamoyladenylate + adenosine(37) in tRNA = N(6)-L-threonylcarbamoyladenosine(37) in tRNA + AMP + H(+). In terms of biological role, required for the formation of a threonylcarbamoyl group on adenosine at position 37 (t(6)A37) in tRNAs that read codons beginning with adenine. Is involved in the transfer of the threonylcarbamoyl moiety of threonylcarbamoyl-AMP (TC-AMP) to the N6 group of A37, together with TsaE and TsaB. TsaD likely plays a direct catalytic role in this reaction. The polypeptide is tRNA N6-adenosine threonylcarbamoyltransferase (Prochlorococcus marinus (strain AS9601)).